The sequence spans 125 residues: Small ribosomal subunit protein uS11m (125 aa).

The protein belongs to the universal ribosomal protein uS11 family.

Its subcellular location is the mitochondrion. The protein is Small ribosomal subunit protein uS11m (RPS11) of Marchantia polymorpha (Common liverwort).